Here is a 430-residue protein sequence, read N- to C-terminus: 5-methylthioadenosine/S-adenosylhomocysteine deaminase (430 aa).

2 residues coordinate Zn(2+): histidine 63 and histidine 65. Glutamate 92, arginine 144, and histidine 182 together coordinate substrate. Position 209 (histidine 209) interacts with Zn(2+). Substrate is bound by residues glutamate 212 and aspartate 297. Residue aspartate 297 coordinates Zn(2+).

Belongs to the metallo-dependent hydrolases superfamily. MTA/SAH deaminase family. Requires Zn(2+) as cofactor.

It catalyses the reaction S-adenosyl-L-homocysteine + H2O + H(+) = S-inosyl-L-homocysteine + NH4(+). It carries out the reaction S-methyl-5'-thioadenosine + H2O + H(+) = S-methyl-5'-thioinosine + NH4(+). Functionally, catalyzes the deamination of 5-methylthioadenosine and S-adenosyl-L-homocysteine into 5-methylthioinosine and S-inosyl-L-homocysteine, respectively. Is also able to deaminate adenosine. In Desulforudis audaxviator (strain MP104C), this protein is 5-methylthioadenosine/S-adenosylhomocysteine deaminase.